The sequence spans 370 residues: NSFL1 cofactor p47 (370 aa).

Positions 54–73 are enriched in polar residues; that stretch reads SQATPSSVSRGTAPSDNRVT. Positions 54–116 are disordered; it reads SQATPSSVSR…VGPPRKKSPN (63 aa). Phosphoserine occurs at positions 74, 102, 114, and 140. The short motif at 109–115 is the Nuclear localization signal element; the sequence is PPRKKSP. The residue at position 167 (Tyr-167) is a Phosphotyrosine. The short motif at 172–175 is the Nuclear localization signal element; sequence KRQH. 3 positions are modified to phosphoserine: Ser-176, Ser-192, and Ser-272. The region spanning 179–244 is the SEP domain; that stretch reads DVHVVLKLWK…MEDHRDEDFV (66 aa). A compositionally biased stretch (polar residues) spans 261-287; the sequence is GSTAPQVLSTSSPAQQAENEAKASSSI. The disordered stretch occupies residues 261-289; it reads GSTAPQVLSTSSPAQQAENEAKASSSILI. The 78-residue stretch at 291–368 folds into the UBX domain; that stretch reads ESEPTTNIQI…NLLNAVIVQR (78 aa).

This sequence belongs to the NSFL1C family. As to quaternary structure, part of a ternary complex containing STX5A, NSFL1C and VCP. NSFL1C forms a homotrimer that binds to one end of a VCP homohexamer. The complex binds to membranes enriched in phosphatidylethanolamine-containing lipids and promotes Golgi membrane fusion. Interaction with VCIP135 leads to dissociation of the complex via ATP hydrolysis by VCP. Binds ubiquitin and mono-ubiquitinated proteins via its N-terminal UBA-like domain when bound to VCP. Post-translationally, phosphorylated during mitosis. Phosphorylation inhibits interaction with Golgi membranes and is required for the fragmentation of the Golgi stacks during mitosis.

The protein localises to the nucleus. It is found in the golgi apparatus. Its subcellular location is the golgi stack. The protein resides in the chromosome. It localises to the cytoplasm. The protein localises to the cytoskeleton. It is found in the microtubule organizing center. Its subcellular location is the centrosome. Reduces the ATPase activity of VCP. Necessary for the fragmentation of Golgi stacks during mitosis and for VCP-mediated reassembly of Golgi stacks after mitosis. May play a role in VCP-mediated formation of transitional endoplasmic reticulum (tER). Inhibits the activity of CTSL (in vitro). Together with UBXN2B/p37, regulates the centrosomal levels of kinase AURKA/Aurora A during mitotic progression by promoting AURKA removal from centrosomes in prophase. Also, regulates spindle orientation during mitosis. The chain is NSFL1 cofactor p47 (NSFL1C) from Homo sapiens (Human).